Here is a 361-residue protein sequence, read N- to C-terminus: MIRARQSVQEIKEYVAGKNVEEVAASYGIDEKSIIKLASNESCLGASPLAIEAIRKAACDAHVYPSVDAIELREALAMRHGVPVRNIVCGNGMDAVIETLLRAFLETGDEVVIPLPAFSYYENVTRFCGATPKYCARRADFSLDVDAVLKQVTDRTKFIFITSPNNPTGNLTSLAEIRSVANAVDGIVFVDEAYIDFSGGKTALELMKECDNIVIGRTMSKAWGLAGMRIGYGFMPDWIFREYMKVATPFALSRIAIAAALAALKDEEHYNRTVETVKAERQFLMENVPFKVYPSEANFVLIDTAPLTSKHVVTEAMKRGVILRDCASFREMGDRYVRITVGTREQNVRLVEVLAEIKGSR.

Lys221 carries the post-translational modification N6-(pyridoxal phosphate)lysine.

The protein belongs to the class-II pyridoxal-phosphate-dependent aminotransferase family. Histidinol-phosphate aminotransferase subfamily. Pyridoxal 5'-phosphate serves as cofactor.

It catalyses the reaction L-histidinol phosphate + 2-oxoglutarate = 3-(imidazol-4-yl)-2-oxopropyl phosphate + L-glutamate. It functions in the pathway amino-acid biosynthesis; L-histidine biosynthesis; L-histidine from 5-phospho-alpha-D-ribose 1-diphosphate: step 7/9. This chain is Histidinol-phosphate aminotransferase, found in Methanocella arvoryzae (strain DSM 22066 / NBRC 105507 / MRE50).